The sequence spans 347 residues: GMP reductase (347 aa).

Position 108 to 131 (108 to 131) interacts with NADP(+); sequence ADFEKTVQILALNPALNFVCIDVA. G181 and G183 together coordinate K(+). C186 (thioimidate intermediate) is an active-site residue. 216–239 is a binding site for NADP(+); that stretch reads IVSDGGCTMPGDVAKAFGGGADFV.

The protein belongs to the IMPDH/GMPR family. GuaC type 1 subfamily. Homotetramer.

It catalyses the reaction IMP + NH4(+) + NADP(+) = GMP + NADPH + 2 H(+). Functionally, catalyzes the irreversible NADPH-dependent deamination of GMP to IMP. It functions in the conversion of nucleobase, nucleoside and nucleotide derivatives of G to A nucleotides, and in maintaining the intracellular balance of A and G nucleotides. The chain is GMP reductase from Salmonella typhi.